A 257-amino-acid polypeptide reads, in one-letter code: uncharacterized protein (257 aa).

6 helical membrane-spanning segments follow: residues 5–25 (FLYFITKSISYALFMVLIVTF), 29–49 (LALVGLFLPGIVLMSILGTLI), 53–73 (TLSFYPAWIVGIIGCMCGDWI), 146–166 (LGCILWPPIYFLPGIFTGIAI), 180–200 (IQFLAAILLIWLGIFLLWKLW), and 216–236 (VNLCLLLTISLSAGITIMIYI).

Belongs to the DedA family.

The protein resides in the cell membrane. This is an uncharacterized protein from Buchnera aphidicola subsp. Baizongia pistaciae (strain Bp).